Reading from the N-terminus, the 274-residue chain is Rhamnulose-1-phosphate aldolase (274 aa).

E117 is an active-site residue. H141, H143, and H212 together coordinate Zn(2+).

Belongs to the aldolase class II family. RhaD subfamily. In terms of assembly, homotetramer. Requires Zn(2+) as cofactor.

It is found in the cytoplasm. The catalysed reaction is L-rhamnulose 1-phosphate = (S)-lactaldehyde + dihydroxyacetone phosphate. The protein operates within carbohydrate degradation; L-rhamnose degradation; glycerone phosphate from L-rhamnose: step 3/3. In terms of biological role, catalyzes the reversible cleavage of L-rhamnulose-1-phosphate to dihydroxyacetone phosphate (DHAP) and L-lactaldehyde. This Escherichia coli O127:H6 (strain E2348/69 / EPEC) protein is Rhamnulose-1-phosphate aldolase.